Reading from the N-terminus, the 269-residue chain is LOB domain-containing protein 6 (269 aa).

An LOB domain is found at 37–138 (SPCAACKFLR…QDLARAKFEL (102 aa)).

The protein belongs to the LOB domain-containing protein family.

It is found in the nucleus. Its function is as follows. Negative regulator of cell proliferation in the adaxial side of leaves. Regulates the formation of a symmetric lamina and the establishment of venation. This chain is LOB domain-containing protein 6 (LBD6), found in Oryza sativa subsp. indica (Rice).